We begin with the raw amino-acid sequence, 321 residues long: Lipoyl synthase (321 aa).

Residues cysteine 68, cysteine 73, cysteine 79, cysteine 94, cysteine 98, cysteine 101, and serine 308 each coordinate [4Fe-4S] cluster. The Radical SAM core domain maps to 80-297 (FNHGTATFMI…KDVAMGLGFS (218 aa)).

This sequence belongs to the radical SAM superfamily. Lipoyl synthase family. [4Fe-4S] cluster is required as a cofactor.

It is found in the cytoplasm. The enzyme catalyses [[Fe-S] cluster scaffold protein carrying a second [4Fe-4S](2+) cluster] + N(6)-octanoyl-L-lysyl-[protein] + 2 oxidized [2Fe-2S]-[ferredoxin] + 2 S-adenosyl-L-methionine + 4 H(+) = [[Fe-S] cluster scaffold protein] + N(6)-[(R)-dihydrolipoyl]-L-lysyl-[protein] + 4 Fe(3+) + 2 hydrogen sulfide + 2 5'-deoxyadenosine + 2 L-methionine + 2 reduced [2Fe-2S]-[ferredoxin]. Its pathway is protein modification; protein lipoylation via endogenous pathway; protein N(6)-(lipoyl)lysine from octanoyl-[acyl-carrier-protein]: step 2/2. Functionally, catalyzes the radical-mediated insertion of two sulfur atoms into the C-6 and C-8 positions of the octanoyl moiety bound to the lipoyl domains of lipoate-dependent enzymes, thereby converting the octanoylated domains into lipoylated derivatives. The sequence is that of Lipoyl synthase from Aeromonas hydrophila subsp. hydrophila (strain ATCC 7966 / DSM 30187 / BCRC 13018 / CCUG 14551 / JCM 1027 / KCTC 2358 / NCIMB 9240 / NCTC 8049).